The primary structure comprises 99 residues: Large ribosomal subunit protein uL23 (99 aa).

Belongs to the universal ribosomal protein uL23 family. In terms of assembly, part of the 50S ribosomal subunit. Contacts protein L29, and trigger factor when it is bound to the ribosome.

Functionally, one of the early assembly proteins it binds 23S rRNA. One of the proteins that surrounds the polypeptide exit tunnel on the outside of the ribosome. Forms the main docking site for trigger factor binding to the ribosome. In Blochmanniella floridana, this protein is Large ribosomal subunit protein uL23.